Reading from the N-terminus, the 103-residue chain is Nucleoid-associated protein Anae109_3761 (103 aa).

It belongs to the YbaB/EbfC family. In terms of assembly, homodimer.

The protein localises to the cytoplasm. It localises to the nucleoid. Functionally, binds to DNA and alters its conformation. May be involved in regulation of gene expression, nucleoid organization and DNA protection. This chain is Nucleoid-associated protein Anae109_3761, found in Anaeromyxobacter sp. (strain Fw109-5).